The chain runs to 225 residues: tRNA (guanine-N(7)-)-methyltransferase (225 aa).

4 residues coordinate S-adenosyl-L-methionine: Glu56, Glu81, Asp108, and Asp131. Residue Asp131 is part of the active site. Substrate is bound by residues Lys135, Asp167, and Thr204–Glu207.

It belongs to the class I-like SAM-binding methyltransferase superfamily. TrmB family.

It carries out the reaction guanosine(46) in tRNA + S-adenosyl-L-methionine = N(7)-methylguanosine(46) in tRNA + S-adenosyl-L-homocysteine. It functions in the pathway tRNA modification; N(7)-methylguanine-tRNA biosynthesis. In terms of biological role, catalyzes the formation of N(7)-methylguanine at position 46 (m7G46) in tRNA. This chain is tRNA (guanine-N(7)-)-methyltransferase, found in Legionella pneumophila (strain Corby).